Consider the following 294-residue polypeptide: NADH-cytochrome b5 reductase 2 (294 aa).

Residues 11–27 form a helical membrane-spanning segment; that stretch reads VLLPVVAAATSIGLVYH. The FAD-binding FR-type domain occupies 45 to 149; that stretch reads DEWIDLKLKK…KGPIVKWKWE (105 aa). Residue 152–187 participates in FAD binding; sequence QFQSIALIGGGTGITPLYQLLHEITKNPEDKTKVKL.

It belongs to the flavoprotein pyridine nucleotide cytochrome reductase family. Requires FAD as cofactor.

The protein localises to the mitochondrion outer membrane. The enzyme catalyses 2 Fe(III)-[cytochrome b5] + NADH = 2 Fe(II)-[cytochrome b5] + NAD(+) + H(+). In terms of biological role, may mediate the reduction of outer membrane cytochrome b5. This is NADH-cytochrome b5 reductase 2 (MCR1) from Meyerozyma guilliermondii (strain ATCC 6260 / CBS 566 / DSM 6381 / JCM 1539 / NBRC 10279 / NRRL Y-324) (Yeast).